The chain runs to 236 residues: Small ribosomal subunit protein uS2c (236 aa).

Belongs to the universal ribosomal protein uS2 family.

It is found in the plastid. The protein localises to the chloroplast. The chain is Small ribosomal subunit protein uS2c (rps2) from Daucus carota (Wild carrot).